Here is a 367-residue protein sequence, read N- to C-terminus: Probable dual-specificity RNA methyltransferase RlmN (367 aa).

The Proton acceptor role is filled by Glu-92. In terms of domain architecture, Radical SAM core spans 98 to 326 (QEYGLSVCVT…YDTLKKNGIN (229 aa)). Cys-105 and Cys-341 are joined by a disulfide. [4Fe-4S] cluster-binding residues include Cys-112, Cys-116, and Cys-119. Residues 164–165 (GE), Ser-196, 219–221 (SLH), and Asn-297 contribute to the S-adenosyl-L-methionine site. The S-methylcysteine intermediate role is filled by Cys-341.

This sequence belongs to the radical SAM superfamily. RlmN family. The cofactor is [4Fe-4S] cluster.

It is found in the cytoplasm. It carries out the reaction adenosine(2503) in 23S rRNA + 2 reduced [2Fe-2S]-[ferredoxin] + 2 S-adenosyl-L-methionine = 2-methyladenosine(2503) in 23S rRNA + 5'-deoxyadenosine + L-methionine + 2 oxidized [2Fe-2S]-[ferredoxin] + S-adenosyl-L-homocysteine. The enzyme catalyses adenosine(37) in tRNA + 2 reduced [2Fe-2S]-[ferredoxin] + 2 S-adenosyl-L-methionine = 2-methyladenosine(37) in tRNA + 5'-deoxyadenosine + L-methionine + 2 oxidized [2Fe-2S]-[ferredoxin] + S-adenosyl-L-homocysteine. Functionally, specifically methylates position 2 of adenine 2503 in 23S rRNA and position 2 of adenine 37 in tRNAs. This Listeria innocua serovar 6a (strain ATCC BAA-680 / CLIP 11262) protein is Probable dual-specificity RNA methyltransferase RlmN.